A 593-amino-acid chain; its full sequence is NADH-quinone oxidoreductase subunit C/D (593 aa).

The tract at residues 1–184 (MTADSALYIP…DPYSLSAAKQ (184 aa)) is NADH dehydrogenase I subunit C. The tract at residues 208–593 (DYMFLNLGPN…IDFVMADVDR (386 aa)) is NADH dehydrogenase I subunit D.

This sequence in the N-terminal section; belongs to the complex I 30 kDa subunit family. The protein in the C-terminal section; belongs to the complex I 49 kDa subunit family. In terms of assembly, NDH-1 is composed of 13 different subunits. Subunits NuoB, CD, E, F, and G constitute the peripheral sector of the complex.

It is found in the cell inner membrane. It carries out the reaction a quinone + NADH + 5 H(+)(in) = a quinol + NAD(+) + 4 H(+)(out). Functionally, NDH-1 shuttles electrons from NADH, via FMN and iron-sulfur (Fe-S) centers, to quinones in the respiratory chain. The immediate electron acceptor for the enzyme in this species is believed to be ubiquinone. Couples the redox reaction to proton translocation (for every two electrons transferred, four hydrogen ions are translocated across the cytoplasmic membrane), and thus conserves the redox energy in a proton gradient. The chain is NADH-quinone oxidoreductase subunit C/D from Pseudomonas aeruginosa (strain UCBPP-PA14).